The following is a 144-amino-acid chain: Large ribosomal subunit protein uL16 (144 aa).

This sequence belongs to the universal ribosomal protein uL16 family. As to quaternary structure, part of the 50S ribosomal subunit.

Functionally, binds 23S rRNA and is also seen to make contacts with the A and possibly P site tRNAs. In Enterococcus faecalis (strain ATCC 700802 / V583), this protein is Large ribosomal subunit protein uL16.